Reading from the N-terminus, the 99-residue chain is Large ribosomal subunit protein bL28 (99 aa).

The interval 1 to 25 is disordered; it reads MSRKCAVTGKGVQTGNNVSHANNKS. Residues 11–22 show a composition bias toward polar residues; it reads GVQTGNNVSHAN.

It belongs to the bacterial ribosomal protein bL28 family.

The chain is Large ribosomal subunit protein bL28 from Rhodospirillum centenum (strain ATCC 51521 / SW).